A 652-amino-acid polypeptide reads, in one-letter code: DNA ligase (652 aa).

NAD(+) contacts are provided by residues 29–33 (DSEYD), 78–79 (SL), and Glu107. The active-site N6-AMP-lysine intermediate is Lys109. NAD(+)-binding residues include Arg130, Glu164, Lys278, and Lys302. Cys395, Cys398, Cys413, and Cys418 together coordinate Zn(2+). In terms of domain architecture, BRCT spans 577–652 (VADAALSGLT…VRDEAWLESL (76 aa)).

It belongs to the NAD-dependent DNA ligase family. LigA subfamily. Mg(2+) is required as a cofactor. Requires Mn(2+) as cofactor.

It carries out the reaction NAD(+) + (deoxyribonucleotide)n-3'-hydroxyl + 5'-phospho-(deoxyribonucleotide)m = (deoxyribonucleotide)n+m + AMP + beta-nicotinamide D-nucleotide.. Its function is as follows. DNA ligase that catalyzes the formation of phosphodiester linkages between 5'-phosphoryl and 3'-hydroxyl groups in double-stranded DNA using NAD as a coenzyme and as the energy source for the reaction. It is essential for DNA replication and repair of damaged DNA. The sequence is that of DNA ligase from Streptococcus pneumoniae (strain JJA).